The chain runs to 470 residues: Uronate isomerase (470 aa).

This sequence belongs to the metallo-dependent hydrolases superfamily. Uronate isomerase family.

It catalyses the reaction D-glucuronate = D-fructuronate. The catalysed reaction is aldehydo-D-galacturonate = keto-D-tagaturonate. Its pathway is carbohydrate metabolism; pentose and glucuronate interconversion. The sequence is that of Uronate isomerase from Salmonella arizonae (strain ATCC BAA-731 / CDC346-86 / RSK2980).